A 272-amino-acid chain; its full sequence is tRNA pseudouridine synthase A (272 aa).

Aspartate 52 functions as the Nucleophile in the catalytic mechanism. Residue tyrosine 110 participates in substrate binding.

This sequence belongs to the tRNA pseudouridine synthase TruA family. In terms of assembly, homodimer.

The catalysed reaction is uridine(38/39/40) in tRNA = pseudouridine(38/39/40) in tRNA. In terms of biological role, formation of pseudouridine at positions 38, 39 and 40 in the anticodon stem and loop of transfer RNAs. The sequence is that of tRNA pseudouridine synthase A from Cupriavidus necator (strain ATCC 17699 / DSM 428 / KCTC 22496 / NCIMB 10442 / H16 / Stanier 337) (Ralstonia eutropha).